The primary structure comprises 362 residues: Homoisocitrate dehydrogenase (362 aa).

Residue valine 79–serine 81 coordinates NADH. Residue serine 81 participates in (2R,3S)-homoisocitrate binding. Serine 81 and serine 91 each carry phosphoserine. 6 residues coordinate (2R,3S)-homoisocitrate: arginine 97, arginine 107, arginine 126, tyrosine 133, lysine 196, and asparagine 198. Residue asparagine 198 coordinates NADH. 3 residues coordinate Mg(2+): aspartate 232, aspartate 256, and aspartate 260. Residues glycine 289–aspartate 293 and asparagine 301 each bind NADH.

Belongs to the isocitrate and isopropylmalate dehydrogenases family. The cofactor is Mg(2+).

The protein resides in the cytoplasm. It catalyses the reaction (2R,3S)-homoisocitrate + NAD(+) = 2-oxoadipate + CO2 + NADH. Its pathway is amino-acid biosynthesis; L-lysine biosynthesis via AAA pathway; L-alpha-aminoadipate from 2-oxoglutarate: step 4/5. This is Homoisocitrate dehydrogenase (lys12) from Schizosaccharomyces pombe (strain 972 / ATCC 24843) (Fission yeast).